Reading from the N-terminus, the 196-residue chain is Imidazole glycerol phosphate synthase subunit HisH (196 aa).

The Glutamine amidotransferase type-1 domain maps to 2-196 (DVVILDTGCA…AQLMKNFLEM (195 aa)). The active-site Nucleophile is the Cys77. Catalysis depends on residues His178 and Glu180.

As to quaternary structure, heterodimer of HisH and HisF.

It localises to the cytoplasm. It carries out the reaction 5-[(5-phospho-1-deoxy-D-ribulos-1-ylimino)methylamino]-1-(5-phospho-beta-D-ribosyl)imidazole-4-carboxamide + L-glutamine = D-erythro-1-(imidazol-4-yl)glycerol 3-phosphate + 5-amino-1-(5-phospho-beta-D-ribosyl)imidazole-4-carboxamide + L-glutamate + H(+). It catalyses the reaction L-glutamine + H2O = L-glutamate + NH4(+). It participates in amino-acid biosynthesis; L-histidine biosynthesis; L-histidine from 5-phospho-alpha-D-ribose 1-diphosphate: step 5/9. Functionally, IGPS catalyzes the conversion of PRFAR and glutamine to IGP, AICAR and glutamate. The HisH subunit catalyzes the hydrolysis of glutamine to glutamate and ammonia as part of the synthesis of IGP and AICAR. The resulting ammonia molecule is channeled to the active site of HisF. The protein is Imidazole glycerol phosphate synthase subunit HisH of Yersinia pestis.